The primary structure comprises 54 residues: Small ribosomal subunit protein uS14 (54 aa).

Residues Cys19, Cys22, Cys37, and Cys40 each coordinate Zn(2+).

Belongs to the universal ribosomal protein uS14 family. Zinc-binding uS14 subfamily. In terms of assembly, part of the 30S ribosomal subunit. Zn(2+) serves as cofactor.

In terms of biological role, binds 16S rRNA, required for the assembly of 30S particles. The polypeptide is Small ribosomal subunit protein uS14 (Sulfurisphaera tokodaii (strain DSM 16993 / JCM 10545 / NBRC 100140 / 7) (Sulfolobus tokodaii)).